The following is a 611-amino-acid chain: MGNSHCVPQAPRRLRASFSRKPSLKGNREDSARMSAGLPGPEAARSGDAAANKLFHYIPGTDILDLENQRENLEQPFLSVFKKGRRRVPVRNLGKVVHYAKVQLRFQHSQDVSDCYLELFPAHLYFQAHGSEGLTFQGLLPLTELSVCPLEGSREHAFQITGPLPAPLLVLCPSRAELDRWLYHLEKQTALLGGPRRCHSAPPQRRLTRLRTASGHEPGGSAVCASRVKLQHLPAQEQWDRLLVLYPTSLAIFSEELDGLCFKGELPLRAVHINLEEKEKQIRSFLIEGPLINTIRVVCASYEDYGHWLLCLRAVTHREGAPPLPGAESFPGSQVMGSGRGSLSSGGQTSWDSGCLAPPSTRTSHSLPESSVPSTVGCSSQHTPDQANSDRASIGRRRTELRRSGSSRSPGSKARAEGRGPVTPLHLDLTQLHRLSLESSPDAPDHTSETSHSPLYADPYTPPATSHRRVTDVRGLEEFLSAMQSARGPTPSSPLPSVPVSVPASDPRSCSSGPAGPYLLSKKGALQSRAAQRHRGSAKDGGPQPPDAPQLVSSAREGSPEPWLPLTDGRSPRRSRDPGYDHLWDETLSSSHQKCPQLGGPEASGGLVQWI.

Positions 1–45 (MGNSHCVPQAPRRLRASFSRKPSLKGNREDSARMSAGLPGPEAAR) are disordered. Glycine 2 is lipidated: N-myristoyl glycine. Positions 61 to 100 (TDILDLENQRENLEQPFLSVFKKGRRRVPVRNLGKVVHYA) are interaction with C1QBP. PH domains are found at residues 96–192 (VVHY…TALL) and 222–319 (AVCA…THRE). Position 302 is a phosphotyrosine (tyrosine 302). 3 disordered regions span residues 323 to 424 (PLPG…PVTP), 438 to 468 (ESSPDAPDHTSETSHSPLYADPYTPPATSHR), and 483 to 611 (MQSA…VQWI). A compositionally biased stretch (low complexity) spans 341 to 350 (GSLSSGGQTS). Residues 360–391 (STRTSHSLPESSVPSTVGCSSQHTPDQANSDR) are compositionally biased toward polar residues. At tyrosine 456 the chain carries Phosphotyrosine. Positions 498–509 (VPVSVPASDPRS) are enriched in low complexity. At serine 559 the chain carries Phosphoserine. The segment covering 570-585 (RSPRRSRDPGYDHLWD) has biased composition (basic and acidic residues).

In terms of assembly, found in a complex with cytochrome c mRNA and various ribosomal proteins. Interacts with C1QBP. Interacts with ELAVL1. Interacts with BID. Post-translationally, phosphorylation is essential for its mitochondrial localization and regulates its interaction with C1QBP. Ubiquitous. Epressed in several cancer cell lines of differing origin.

It is found in the cell membrane. The protein resides in the mitochondrion. Its subcellular location is the mitochondrion membrane. In terms of biological role, controls the stability of the leptin mRNA harboring an AU-rich element (ARE) in its 3' UTR, in cooperation with the RNA stabilizer ELAVL1. Decreases the stability of the leptin mRNA by antagonizing the function of ELAVL1 by inducing its atypical recruitment from the nucleus to the cytosol. Binds to cardiolipin (CL), phosphatidic acid (PA), phosphatidylinositol 4-phosphate (PtdIns(4)P) and phosphatidylserine (PS). Promotes apoptosis by enhancing BAX-BAK hetero-oligomerization via interaction with BID in colon cancer cells. In Homo sapiens (Human), this protein is Pleckstrin homology domain-containing family N member 1 (PLEKHN1).